Reading from the N-terminus, the 256-residue chain is Adenylate kinase (256 aa).

An ATP-binding site is contributed by 49-54; sequence GAGKGT. The segment at 69–98 is NMP; it reads ATGDMLRDQVEKKTPLGIAAKKIMDAGGLV. AMP is bound by residues Thr70, Arg75, 96-98, 125-128, and Gln132; these read GLV and GFPR. The segment at 166-203 is LID; sequence GRLIHPASGRSYHKIFNPPKKAGIDDLTGEPLIQRSDD. Residues Arg167 and 176–177 each bind ATP; that span reads SY. AMP is bound by residues Arg200 and Arg211. Gln239 is a binding site for ATP.

It belongs to the adenylate kinase family. AK2 subfamily. Monomer.

It localises to the cytoplasm. The protein resides in the cytosol. It is found in the mitochondrion intermembrane space. The catalysed reaction is AMP + ATP = 2 ADP. Its function is as follows. Catalyzes the reversible transfer of the terminal phosphate group between ATP and AMP. Plays an important role in cellular energy homeostasis and in adenine nucleotide metabolism. Adenylate kinase activity is critical for regulation of the phosphate utilization and the AMP de novo biosynthesis pathways. This is Adenylate kinase from Coprinopsis cinerea (strain Okayama-7 / 130 / ATCC MYA-4618 / FGSC 9003) (Inky cap fungus).